The primary structure comprises 75 residues: UPF0291 protein lmo1304 (75 aa).

A disordered region spans residues 56-75 (DPNGKDVTPHKVKQLRKNKY). Basic residues predominate over residues 65-75 (HKVKQLRKNKY).

This sequence belongs to the UPF0291 family.

Its subcellular location is the cytoplasm. This is UPF0291 protein lmo1304 from Listeria monocytogenes serovar 1/2a (strain ATCC BAA-679 / EGD-e).